A 228-amino-acid polypeptide reads, in one-letter code: Glycosylphosphatidylinositol-anchored high density lipoprotein-binding protein 1 (228 aa).

The signal sequence occupies residues 1–22; sequence MKALRAVLLILLLSGQPGSGWA. The tract at residues 21–32 is disordered; that stretch reads WAQEDGDADPEP. The tract at residues 24 to 48 is important for LPL transport to the lumenal surface of endothelial cells; the sequence is EDGDADPEPENYNYDDDDDEEEEEE. Over residues 24-49 the composition is skewed to acidic residues; that stretch reads EDGDADPEPENYNYDDDDDEEEEEET. A Sulfotyrosine modification is found at Y35. Residues 61–148 enclose the UPAR/Ly6 domain; the sequence is LQCYFCQVLH…PWQNPQVQNP (88 aa). 5 disulfide bridges follow: C63–C88, C66–C75, C81–C109, C113–C129, and C130–C135. N76 is a glycosylation site (N-linked (GlcNAc...) asparagine). The interval 102–108 is important for interaction with LPL; sequence LTTYSMW. Positions 145–200 are disordered; it reads VQNPLGGRADSPLESGTRHPQGGKFSHPQVVKAAHPQSDGANLPKSGKANQPQGSG. G198 is lipidated: GPI-anchor amidated glycine. A propeptide spans 199–228 (removed in mature form); sequence SGAGYPSGWTKFGNIALLLSFFTCLWASGA.

In terms of assembly, mostly monomer, but also homodimer and homooligomer. Interacts with lipoprotein lipase (LPL). Interacts with high affinity with high-density lipoprotein (HDL). Interacts with chylomicrons. Interacts with APOA5. In terms of processing, glycosylation of Asn-76 is critical for cell surface localization. Post-translationally, sulfation of a Tyr in the N-terminal acidic region increases the affinity for LPL. In terms of tissue distribution, detected in fat tissue. Detected on the luminal surface of capillary endothelial cells in heart, skeletal muscle and brown adipose tissue (at protein level). Detected in heart and brown adipose tissue. Expressed at lower levels in lung and liver.

Its subcellular location is the apical cell membrane. It is found in the basolateral cell membrane. It localises to the cell membrane. In terms of biological role, mediates the transport of lipoprotein lipase LPL from the basolateral to the apical surface of endothelial cells in capillaries. Anchors LPL on the surface of endothelial cells in the lumen of blood capillaries. Thereby, plays an important role in lipolytic processing of chylomicrons by LPL, triglyceride metabolism and lipid homeostasis. Binds chylomicrons and phospholipid particles that contain APOA5. Binds high-density lipoprotein (HDL) and plays a role in the uptake of lipids from HDL. The protein is Glycosylphosphatidylinositol-anchored high density lipoprotein-binding protein 1 of Mus musculus (Mouse).